A 1831-amino-acid chain; its full sequence is Transmembrane protein 131 homolog (1831 aa).

The signal sequence occupies residues 1-29 (MVPSIHKTSNRYRTIYFFLISLLITSTFA). At 30–1169 (DQQAWPLPEE…QALPRPPFEN (1140 aa)) the chain is on the lumenal side. Residues 118-294 (EMDPPMMDFG…QSKQIATLVL (177 aa)) form a papD-L domain region. The helical transmembrane segment at 1170–1190 (IMYYSCVTALIFCLVCVLACA) threads the bilayer. The Cytoplasmic portion of the chain corresponds to 1191 to 1831 (YLEGDRAIAV…TDNENDEKNN (641 aa)). Over residues 1223–1234 (STTTPVPTVPST) the composition is skewed to low complexity. Disordered stretches follow at residues 1223 to 1252 (STTT…RPST), 1325 to 1516 (GQQK…PTDD), 1663 to 1759 (QMKR…VSNP), and 1800 to 1831 (WSSS…EKNN). Residues 1338-1349 (PEFDEVEEEELA) show a composition bias toward acidic residues. Composition is skewed to low complexity over residues 1394–1407 (PIIV…PPVQ) and 1435–1448 (QVPP…TPKT). Residues 1455–1467 (EPEKPIKPSEQKK) show a composition bias toward basic and acidic residues. The segment covering 1480–1497 (TPSKARTPSKTPSQSNRA) has biased composition (polar residues). Positions 1500–1514 (PASSPAPIAPTSAPT) are enriched in low complexity. Composition is skewed to polar residues over residues 1669–1687 (SPSQ…SPQK), 1702–1733 (NQSS…NSIQ), and 1742–1758 (WGDN…TVSN). The segment covering 1808–1820 (PPTQQPSTSQMPQ) has biased composition (low complexity). Over residues 1822–1831 (TDNENDEKNN) the composition is skewed to acidic residues.

The protein belongs to the TMEM131 family. May interact (via PapD-L domain) with collagen proteins (via C-terminus); the interaction is direct and is involved in assembly and secretion of collagen. As to expression, predominantly expressed in the intestine and hypodermis.

It localises to the membrane. Its subcellular location is the endoplasmic reticulum membrane. Collagen binding transmembrane protein involved in collagen secretion, probably by recruiting the ER-to-Golgi transport complex TRAPPIII. Required for normal development. This is Transmembrane protein 131 homolog from Caenorhabditis elegans.